Consider the following 462-residue polypeptide: 7-hydroxymethyl chlorophyll a reductase, chloroplastic (462 aa).

The transit peptide at 1-20 directs the protein to the chloroplast; it reads MITVVTSRLSLLPPVFSVVN.

It belongs to the FrhB family. As to quaternary structure, interacts with SGR1, the chlorophyll catabolic enzymes (CCEs) NYC1, NOL and RCCR, and the LHCII complex. Part of a SGR1-CCE-LHCII complex, which acts in chlorophyll breakdown. FAD serves as cofactor. The cofactor is iron-sulfur cluster.

Its subcellular location is the plastid. It localises to the chloroplast. It carries out the reaction chlorophyll a + 2 oxidized [2Fe-2S]-[ferredoxin] + H2O = 7(1)-hydroxychlorophyll a + 2 reduced [2Fe-2S]-[ferredoxin] + 2 H(+). In terms of biological role, probable iron-sulfur flavoprotein that converts 7-hydroxymethyl chlorophyll a to chlorophyll a using ferredoxin as a reducing equivalent. Catalyzes the reduction of a hydroxymethyl group to a methyl group. Belongs to the chlorophyll catabolic enzymes (CCEs). This Arabidopsis thaliana (Mouse-ear cress) protein is 7-hydroxymethyl chlorophyll a reductase, chloroplastic (HCAR).